The following is a 254-amino-acid chain: Imidazole glycerol phosphate synthase subunit HisF (254 aa).

Residues D12 and D131 contribute to the active site.

Belongs to the HisA/HisF family. Heterodimer of HisH and HisF.

The protein localises to the cytoplasm. It catalyses the reaction 5-[(5-phospho-1-deoxy-D-ribulos-1-ylimino)methylamino]-1-(5-phospho-beta-D-ribosyl)imidazole-4-carboxamide + L-glutamine = D-erythro-1-(imidazol-4-yl)glycerol 3-phosphate + 5-amino-1-(5-phospho-beta-D-ribosyl)imidazole-4-carboxamide + L-glutamate + H(+). The protein operates within amino-acid biosynthesis; L-histidine biosynthesis; L-histidine from 5-phospho-alpha-D-ribose 1-diphosphate: step 5/9. Its function is as follows. IGPS catalyzes the conversion of PRFAR and glutamine to IGP, AICAR and glutamate. The HisF subunit catalyzes the cyclization activity that produces IGP and AICAR from PRFAR using the ammonia provided by the HisH subunit. This is Imidazole glycerol phosphate synthase subunit HisF from Herminiimonas arsenicoxydans.